We begin with the raw amino-acid sequence, 274 residues long: Nitrogenase iron protein (274 aa).

Position 8–15 (8–15) interacts with ATP; sequence GKGGIGKS. Position 94 (C94) interacts with [4Fe-4S] cluster. An ADP-ribosylarginine; by dinitrogenase reductase ADP-ribosyltransferase modification is found at R97. C131 provides a ligand contact to [4Fe-4S] cluster.

It belongs to the NifH/BchL/ChlL family. Homodimer. Requires [4Fe-4S] cluster as cofactor. Post-translationally, the reversible ADP-ribosylation of Arg-97 inactivates the nitrogenase reductase and regulates nitrogenase activity.

It catalyses the reaction N2 + 8 reduced [2Fe-2S]-[ferredoxin] + 16 ATP + 16 H2O = H2 + 8 oxidized [2Fe-2S]-[ferredoxin] + 2 NH4(+) + 16 ADP + 16 phosphate + 6 H(+). Its function is as follows. The key enzymatic reactions in nitrogen fixation are catalyzed by the nitrogenase complex, which has 2 components: the iron protein and the molybdenum-iron protein. The protein is Nitrogenase iron protein of Desulfatibacillum aliphaticivorans.